A 102-amino-acid polypeptide reads, in one-letter code: Co-chaperonin GroES (102 aa).

The protein belongs to the GroES chaperonin family. Heptamer of 7 subunits arranged in a ring. Interacts with the chaperonin GroEL.

Its subcellular location is the cytoplasm. Its function is as follows. Together with the chaperonin GroEL, plays an essential role in assisting protein folding. The GroEL-GroES system forms a nano-cage that allows encapsulation of the non-native substrate proteins and provides a physical environment optimized to promote and accelerate protein folding. GroES binds to the apical surface of the GroEL ring, thereby capping the opening of the GroEL channel. The polypeptide is Co-chaperonin GroES (Streptomyces albus G).